Here is a 508-residue protein sequence, read N- to C-terminus: Phosphoglycerate kinase A (508 aa).

(2R)-3-phosphoglycerate-binding residues include Val32, Asp33, Phe34, Asn35, Arg48, Ser70, His71, Gly73, Arg74, Arg224, His260, and Arg261. ADP contacts are provided by Gly306 and Ala307. Gly306 contacts CDP. Residues Ala307 and Lys308 each contribute to the AMP site. An ATP-binding site is contributed by Ala307. Residue Ala307 coordinates Mg(2+). Position 308 (Lys308) interacts with (2R)-3-phosphoglycerate. CDP is bound at residue Glu311. Glu311 lines the Mg(2+) pocket. ADP-binding residues include Lys312 and Gly330. Lys312 contacts AMP. Lys312 lines the ATP pocket. Gly330 contributes to the CDP binding site. The AMP site is built by Ala331 and Ala403. ATP contacts are provided by Ala331 and Ala403. 2 residues coordinate ADP: Ala403 and Asn427. Positions 428 and 433 each coordinate CDP. ADP-binding residues include Phe433, Glu434, Glu466, and Ser467. Glu434 contacts AMP. Glu434, Glu466, and Ser467 together coordinate ATP. Glu466 contacts Mg(2+).

This sequence belongs to the phosphoglycerate kinase family. Monomer. Mg(2+) serves as cofactor.

The enzyme catalyses (2R)-3-phosphoglycerate + ATP = (2R)-3-phospho-glyceroyl phosphate + ADP. It participates in carbohydrate degradation; glycolysis; pyruvate from D-glyceraldehyde 3-phosphate: step 2/5. The sequence is that of Phosphoglycerate kinase A from Trypanosoma brucei brucei.